Consider the following 582-residue polypeptide: Formate--tetrahydrofolate ligase (582 aa).

Residue 65–72 coordinates ATP; it reads TPLGEGKT.

It belongs to the formate--tetrahydrofolate ligase family.

The catalysed reaction is (6S)-5,6,7,8-tetrahydrofolate + formate + ATP = (6R)-10-formyltetrahydrofolate + ADP + phosphate. It participates in one-carbon metabolism; tetrahydrofolate interconversion. This is Formate--tetrahydrofolate ligase from Vibrio cholerae serotype O1 (strain ATCC 39315 / El Tor Inaba N16961).